Consider the following 406-residue polypeptide: S-adenosylmethionine synthase (406 aa).

His16 is an ATP binding site. Asp18 is a binding site for Mg(2+). Residue Glu44 participates in K(+) binding. L-methionine is bound by residues Glu57 and Gln100. The segment at 100–110 (QSVDIAQGVDR) is flexible loop. ATP is bound by residues 165–167 (DAK), Asp241, 247–248 (RK), Ala264, and Lys268. Residue Asp241 participates in L-methionine binding. Lys272 serves as a coordination point for L-methionine.

Belongs to the AdoMet synthase family. As to quaternary structure, homotetramer; dimer of dimers. It depends on Mg(2+) as a cofactor. K(+) is required as a cofactor.

It is found in the cytoplasm. The enzyme catalyses L-methionine + ATP + H2O = S-adenosyl-L-methionine + phosphate + diphosphate. The protein operates within amino-acid biosynthesis; S-adenosyl-L-methionine biosynthesis; S-adenosyl-L-methionine from L-methionine: step 1/1. Catalyzes the formation of S-adenosylmethionine (AdoMet) from methionine and ATP. The overall synthetic reaction is composed of two sequential steps, AdoMet formation and the subsequent tripolyphosphate hydrolysis which occurs prior to release of AdoMet from the enzyme. This chain is S-adenosylmethionine synthase, found in Chromohalobacter salexigens (strain ATCC BAA-138 / DSM 3043 / CIP 106854 / NCIMB 13768 / 1H11).